Reading from the N-terminus, the 444-residue chain is uncharacterized protein (444 aa).

The region spanning 1-69 is the HTH gntR-type domain; the sequence is MEKYMSLLTR…PKSGYYIVKK (69 aa). The H-T-H motif DNA-binding region spans 29-48; sequence IRQLSARYQVSKSTVIRALQ. The residue at position 286 (Lys286) is an N6-(pyridoxal phosphate)lysine.

This sequence in the C-terminal section; belongs to the class-I pyridoxal-phosphate-dependent aminotransferase family. It depends on pyridoxal 5'-phosphate as a cofactor.

This is an uncharacterized protein from Bacillus subtilis (strain 168).